Reading from the N-terminus, the 396-residue chain is Ribosomal RNA large subunit methyltransferase I (396 aa).

The PUA domain maps to 2–81 (SVRLVLAKGR…ESIDIAFFTR (80 aa)).

This sequence belongs to the methyltransferase superfamily. RlmI family.

Its subcellular location is the cytoplasm. The enzyme catalyses cytidine(1962) in 23S rRNA + S-adenosyl-L-methionine = 5-methylcytidine(1962) in 23S rRNA + S-adenosyl-L-homocysteine + H(+). Its function is as follows. Specifically methylates the cytosine at position 1962 (m5C1962) of 23S rRNA. This is Ribosomal RNA large subunit methyltransferase I from Escherichia coli (strain UTI89 / UPEC).